The chain runs to 545 residues: Chaperonin GroEL (545 aa).

Residues 30 to 33 (TLGP), lysine 51, 87 to 91 (DGTTT), glycine 415, 479 to 481 (NAA), and aspartate 495 each bind ATP.

Belongs to the chaperonin (HSP60) family. As to quaternary structure, forms a cylinder of 14 subunits composed of two heptameric rings stacked back-to-back. Interacts with the co-chaperonin GroES.

The protein localises to the cytoplasm. The enzyme catalyses ATP + H2O + a folded polypeptide = ADP + phosphate + an unfolded polypeptide.. Together with its co-chaperonin GroES, plays an essential role in assisting protein folding. The GroEL-GroES system forms a nano-cage that allows encapsulation of the non-native substrate proteins and provides a physical environment optimized to promote and accelerate protein folding. The sequence is that of Chaperonin GroEL from Tolumonas auensis (strain DSM 9187 / NBRC 110442 / TA 4).